We begin with the raw amino-acid sequence, 210 residues long: MTLSRVHQQVIAFPAVNTAPVGYLPDPASINKLQIPTSSKVSMLQKKKTDSFTNGARDQDKLGPKLTETVKRKLSLGAKILQMGGLEKIYKRLFKVCDKEKLFKAYQCYLSTTEGSIAGLLFISSKKIAFCSERSIKVTSPQGDLTRVHYKVSIPLCKINGVNQSQNTKKPSQRYLEVVTVDNYDFWFMGFVSYQKAFNCLEKALNEDEQ.

One can recognise a GRAM domain in the interval 88–166 (KIYKRLFKVC…CKINGVNQSQ (79 aa)).

The protein belongs to the GEM family.

The protein is GEM-like protein 7 of Arabidopsis thaliana (Mouse-ear cress).